The chain runs to 258 residues: Phosphoadenosine 5'-phosphosulfate reductase (258 aa).

C244 acts as the Nucleophile; cysteine thiosulfonate intermediate in catalysis.

This sequence belongs to the PAPS reductase family. CysH subfamily.

It localises to the cytoplasm. It carries out the reaction [thioredoxin]-disulfide + sulfite + adenosine 3',5'-bisphosphate + 2 H(+) = [thioredoxin]-dithiol + 3'-phosphoadenylyl sulfate. It functions in the pathway sulfur metabolism; hydrogen sulfide biosynthesis; sulfite from sulfate: step 3/3. In terms of biological role, catalyzes the formation of sulfite from phosphoadenosine 5'-phosphosulfate (PAPS) using thioredoxin as an electron donor. The polypeptide is Phosphoadenosine 5'-phosphosulfate reductase (Vibrio vulnificus (strain CMCP6)).